We begin with the raw amino-acid sequence, 258 residues long: Snake venom serine proteinase 8 (258 aa).

The signal sequence occupies residues 1–18 (MVLIRVLANLLILQLSYA). The propeptide occupies 19 to 24 (QKSSEL). Positions 25–249 (VIGGDECNIN…YNDWIQSIIA (225 aa)) constitute a Peptidase S1 domain. Disulfide bonds link cysteine 31/cysteine 163, cysteine 50/cysteine 66, cysteine 98/cysteine 256, cysteine 142/cysteine 210, cysteine 174/cysteine 189, and cysteine 200/cysteine 225. N-linked (GlcNAc...) asparagine glycosylation occurs at asparagine 44. Catalysis depends on charge relay system residues histidine 65 and aspartate 110. Serine 204 (charge relay system) is an active-site residue.

This sequence belongs to the peptidase S1 family. Snake venom subfamily. In terms of assembly, monomer. As to expression, expressed by the venom gland.

It localises to the secreted. Snake venom serine protease that may act in the hemostasis system of the prey. The chain is Snake venom serine proteinase 8 from Crotalus adamanteus (Eastern diamondback rattlesnake).